Reading from the N-terminus, the 530-residue chain is Glucose-6-phosphate 1-dehydrogenase (530 aa).

NADP(+)-binding positions include 53–60 (GASGDLAK), R87, Y162, and K186. D-glucose 6-phosphate is bound by residues K186, 216–220 (HYLGK), E254, and D273. The Proton acceptor role is filled by H278. An NADP(+)-binding site is contributed by R372. K375 and R380 together coordinate D-glucose 6-phosphate. Residues K381, R385, and R408 each coordinate NADP(+). Q410 is a D-glucose 6-phosphate binding site. Residues 416–418 (YAK), 436–438 (DLT), R502, Y518, and W524 each bind NADP(+).

Belongs to the glucose-6-phosphate dehydrogenase family.

It is found in the cytoplasm. The protein resides in the cytosol. The enzyme catalyses D-glucose 6-phosphate + NADP(+) = 6-phospho-D-glucono-1,5-lactone + NADPH + H(+). Its pathway is carbohydrate degradation; pentose phosphate pathway; D-ribulose 5-phosphate from D-glucose 6-phosphate (oxidative stage): step 1/3. In terms of biological role, cytosolic glucose-6-phosphate dehydrogenase that catalyzes the first and rate-limiting step of the oxidative branch within the pentose phosphate pathway/shunt, an alternative route to glycolysis for the dissimilation of carbohydrates and a major source of reducing power and metabolic intermediates for fatty acid and nucleic acid biosynthetic processes. The polypeptide is Glucose-6-phosphate 1-dehydrogenase (g6pd) (Takifugu rubripes (Japanese pufferfish)).